The primary structure comprises 109 residues: Parvalbumin, thymic (109 aa).

Ala2 bears the N-acetylalanine mark. 2 consecutive EF-hand domains span residues 39–74 and 78–109; these read KTPD…FSSS and LTSA…LVKA. Ca(2+)-binding residues include Asp52, Asp54, Ser56, Glu63, Asp91, Asp93, Asp95, Lys97, and Glu102.

The protein belongs to the parvalbumin family.

Appears to promote immune maturation in bone marrow cells in culture. Binds two calcium ions. The protein is Parvalbumin, thymic of Gallus gallus (Chicken).